The following is a 199-amino-acid chain: Small ribosomal subunit protein uS4B (199 aa).

The region spanning 88–151 (CRLDNLVYRT…RKNKIFIDNF (64 aa)) is the S4 RNA-binding domain.

Belongs to the universal ribosomal protein uS4 family. In terms of assembly, part of the 30S ribosomal subunit. Contacts protein S5. The interaction surface between S4 and S5 is involved in control of translational fidelity.

One of the primary rRNA binding proteins, it binds directly to 16S rRNA where it nucleates assembly of the body of the 30S subunit. In terms of biological role, with S5 and S12 plays an important role in translational accuracy. This Alkaliphilus metalliredigens (strain QYMF) protein is Small ribosomal subunit protein uS4B.